A 384-amino-acid polypeptide reads, in one-letter code: Spermatogenesis-associated protein 32 (384 aa).

Residues 23–60 are disordered; the sequence is RDDLSQHQIQEEQELEADMLEQKPQLQVDLDLDPDPDP. A phosphoserine mark is found at Ser167 and Ser170. 3 disordered regions span residues 211 to 232, 284 to 310, and 340 to 366; these read DAHS…SSDL, VEER…LKSW, and LLQP…EKEN. The segment covering 214–231 has biased composition (low complexity); sequence SAPPTTSSQAPSPLLSSD. The span at 353 to 366 shows a compositional bias: basic and acidic residues; it reads SKEDSVPPGKEKEN.

As to quaternary structure, interacts with syntaxin-1 and ACTB. As to expression, detected in testis, and on the acrosomal cap of spermatids.

This is Spermatogenesis-associated protein 32 (SPATA32) from Homo sapiens (Human).